Here is a 1249-residue protein sequence, read N- to C-terminus: ATP-dependent helicase/nuclease subunit A (1249 aa).

Positions T5–V482 constitute a UvrD-like helicase ATP-binding domain. A26–T33 lines the ATP pocket. The 291-residue stretch at A521 to G811 folds into the UvrD-like helicase C-terminal domain.

The protein belongs to the helicase family. AddA subfamily. In terms of assembly, heterodimer of AddA and AddB/RexB. Requires Mg(2+) as cofactor.

It carries out the reaction Couples ATP hydrolysis with the unwinding of duplex DNA by translocating in the 3'-5' direction.. The catalysed reaction is ATP + H2O = ADP + phosphate + H(+). Its function is as follows. The heterodimer acts as both an ATP-dependent DNA helicase and an ATP-dependent, dual-direction single-stranded exonuclease. Recognizes the chi site generating a DNA molecule suitable for the initiation of homologous recombination. The AddA nuclease domain is required for chi fragment generation; this subunit has the helicase and 3' -&gt; 5' nuclease activities. The sequence is that of ATP-dependent helicase/nuclease subunit A from Lactiplantibacillus plantarum (strain ATCC BAA-793 / NCIMB 8826 / WCFS1) (Lactobacillus plantarum).